We begin with the raw amino-acid sequence, 156 residues long: Small ribosomal subunit protein uS7 (156 aa).

It belongs to the universal ribosomal protein uS7 family. Part of the 30S ribosomal subunit. Contacts proteins S9 and S11.

One of the primary rRNA binding proteins, it binds directly to 16S rRNA where it nucleates assembly of the head domain of the 30S subunit. Is located at the subunit interface close to the decoding center, probably blocks exit of the E-site tRNA. This chain is Small ribosomal subunit protein uS7, found in Geobacter sulfurreducens (strain ATCC 51573 / DSM 12127 / PCA).